Reading from the N-terminus, the 362-residue chain is Phosphoserine aminotransferase (362 aa).

Arginine 43 provides a ligand contact to L-glutamate. Pyridoxal 5'-phosphate contacts are provided by residues 77-78 (AT), tryptophan 103, threonine 153, aspartate 173, and glutamine 196. Lysine 197 is subject to N6-(pyridoxal phosphate)lysine. 238 to 239 (NT) is a binding site for pyridoxal 5'-phosphate.

It belongs to the class-V pyridoxal-phosphate-dependent aminotransferase family. SerC subfamily. As to quaternary structure, homodimer. It depends on pyridoxal 5'-phosphate as a cofactor.

The protein localises to the cytoplasm. It catalyses the reaction O-phospho-L-serine + 2-oxoglutarate = 3-phosphooxypyruvate + L-glutamate. The catalysed reaction is 4-(phosphooxy)-L-threonine + 2-oxoglutarate = (R)-3-hydroxy-2-oxo-4-phosphooxybutanoate + L-glutamate. The protein operates within amino-acid biosynthesis; L-serine biosynthesis; L-serine from 3-phospho-D-glycerate: step 2/3. It functions in the pathway cofactor biosynthesis; pyridoxine 5'-phosphate biosynthesis; pyridoxine 5'-phosphate from D-erythrose 4-phosphate: step 3/5. In terms of biological role, catalyzes the reversible conversion of 3-phosphohydroxypyruvate to phosphoserine and of 3-hydroxy-2-oxo-4-phosphonooxybutanoate to phosphohydroxythreonine. This Xylella fastidiosa (strain Temecula1 / ATCC 700964) protein is Phosphoserine aminotransferase.